We begin with the raw amino-acid sequence, 427 residues long: MDLQYQSGFANHFSTEAVPGALPVGQNSPQAPPYGLYAEQLSGTAFTAPRHENRRSWLYRLRPSAGHGPYAPYVQERLKSGPFGAAVPTPNRLRWDPLEIPEAPLDFVDGLVTLAGNGDVATQAGMAAHLYLANRSMIDRVFQNADGELLIVPQLGALRFVTELGVIDAAPGEVVVIPRGVRFRVELEGPVRGYVCENYGPMFRLPELGPIGSNGLANSRDFLTPVAAFEDVERPTEVIQKFQGGLWTGTWDHSPLDVVAWHGNLAPYKYDLARFNTMGTVSFDHPDPSIFTVLTAPSEIPGTANVDFVIFPPRWMVAEHTFRPPWFHRNVMSEFMGLVTGAYDAKAGGFSPGGASLHNMMSDHGPDVASHKAASEADLSPHKIEATMAFMFESRWVIRPTKYALETSELQADYDACWTGFPKAKLP.

The active-site Proton acceptor is H285. Residues H328 and E334 each contribute to the Fe cation site. 2 residues coordinate homogentisate: Y343 and H364. H364 provides a ligand contact to Fe cation.

This sequence belongs to the homogentisate dioxygenase family. Hexamer; dimer of trimers. The cofactor is Fe cation.

The enzyme catalyses homogentisate + O2 = 4-maleylacetoacetate + H(+). It participates in amino-acid degradation; L-phenylalanine degradation; acetoacetate and fumarate from L-phenylalanine: step 4/6. In terms of biological role, involved in the catabolism of homogentisate (2,5-dihydroxyphenylacetate or 2,5-OH-PhAc), a central intermediate in the degradation of phenylalanine and tyrosine. Catalyzes the oxidative ring cleavage of the aromatic ring of homogentisate to yield maleylacetoacetate. In Caulobacter sp. (strain K31), this protein is Homogentisate 1,2-dioxygenase.